A 199-amino-acid polypeptide reads, in one-letter code: Probable nicotinate-nucleotide adenylyltransferase (199 aa).

Belongs to the NadD family.

It carries out the reaction nicotinate beta-D-ribonucleotide + ATP + H(+) = deamido-NAD(+) + diphosphate. It participates in cofactor biosynthesis; NAD(+) biosynthesis; deamido-NAD(+) from nicotinate D-ribonucleotide: step 1/1. Its function is as follows. Catalyzes the reversible adenylation of nicotinate mononucleotide (NaMN) to nicotinic acid adenine dinucleotide (NaAD). In Leptospira interrogans serogroup Icterohaemorrhagiae serovar copenhageni (strain Fiocruz L1-130), this protein is Probable nicotinate-nucleotide adenylyltransferase.